Here is a 562-residue protein sequence, read N- to C-terminus: Urocanate hydratase (562 aa).

NAD(+) contacts are provided by residues glycine 52 to glycine 53, glutamine 130, glycine 176 to glycine 178, glutamate 196, arginine 201, asparagine 242 to alanine 243, glutamine 263 to histidine 267, tyrosine 273 to leucine 274, and tyrosine 322. Cysteine 410 is an active-site residue. Glycine 492 is a binding site for NAD(+).

Belongs to the urocanase family. NAD(+) serves as cofactor.

It localises to the cytoplasm. It carries out the reaction 4-imidazolone-5-propanoate = trans-urocanate + H2O. It functions in the pathway amino-acid degradation; L-histidine degradation into L-glutamate; N-formimidoyl-L-glutamate from L-histidine: step 2/3. Functionally, catalyzes the conversion of urocanate to 4-imidazolone-5-propionate. In Shewanella pealeana (strain ATCC 700345 / ANG-SQ1), this protein is Urocanate hydratase.